Reading from the N-terminus, the 694-residue chain is Methionine--tRNA ligase (694 aa).

Residues P12 to H22 carry the 'HIGH' region motif. The Zn(2+) site is built by C143, C146, C156, and C159. Positions K330–S334 match the 'KMSKS' region motif. Position 333 (K333) interacts with ATP. Low complexity predominate over residues L550 to A575. Residues L550 to P580 are disordered. One can recognise a tRNA-binding domain in the interval D591–R694.

This sequence belongs to the class-I aminoacyl-tRNA synthetase family. MetG type 1 subfamily. Homodimer. The cofactor is Zn(2+).

The protein localises to the cytoplasm. It carries out the reaction tRNA(Met) + L-methionine + ATP = L-methionyl-tRNA(Met) + AMP + diphosphate. Functionally, is required not only for elongation of protein synthesis but also for the initiation of all mRNA translation through initiator tRNA(fMet) aminoacylation. This chain is Methionine--tRNA ligase, found in Xanthomonas oryzae pv. oryzae (strain MAFF 311018).